Consider the following 170-residue polypeptide: Large ribosomal subunit protein uL10 (170 aa).

Belongs to the universal ribosomal protein uL10 family. Part of the ribosomal stalk of the 50S ribosomal subunit. The N-terminus interacts with L11 and the large rRNA to form the base of the stalk. The C-terminus forms an elongated spine to which L12 dimers bind in a sequential fashion forming a multimeric L10(L12)X complex.

Functionally, forms part of the ribosomal stalk, playing a central role in the interaction of the ribosome with GTP-bound translation factors. This is Large ribosomal subunit protein uL10 from Corynebacterium urealyticum (strain ATCC 43042 / DSM 7109).